A 724-amino-acid polypeptide reads, in one-letter code: Pre-mRNA-splicing factor CLF1 (724 aa).

HAT repeat units follow at residues 55-87 (EFQARKRTEFESRIRYSRDSILAWTKYAQWEAS), 89-121 (NEYERSRSVFERALDVDPRSVDLWIKYTDMELK), 123-155 (RNINHARNLFDRAITLLPRVDALWYKYVYLEEL), 157-188 (LNVSGARQIFERWMQWEPNDKAWQSYIKLEER), 190-221 (NELDRASAIYERWIACRPIPKNWVAWAKFEED), 223-262 (GQPDKAREVFQTALEFFGDEEEQVEKAQSVFAAFARMETR), 264-298 (KEFERARVIYKFALARLPRSKSASLYAQYTKFEKQ), 308-340 (TVLGKRRIQYEEELAYDPTNYDAWFSLARLEED), 352-386 (VEPMRVREVYERAVANVPPALEKRYWRRYIYLWLQ), 396-432 (KDYDRARDVYKAAVKLVPHKTFTFAKLWLAYAYFEIR), 434-465 (LDVSAARKVLGAGIGMCPKPKLFTGYIELEMR), 467-499 (REFDRVRTLYEKFLTYDPSLSSAWIQWTQVESA), 501-534 (EDFERVRAIFELAVQQSLDMPEIVWKAYIDFEAG), 536-567 (GERERARNLYERLLERTSHVKVWISYALMEIA), 585-626 (GDAD…EHGD), and 635-667 (DMLPTTRKRWRKAEDGSGELEEYWDLVFPDDEK). Residues 681-724 (QAWAQQRAGQGEEGGLSYDLPSDSESENEDEDGDNREEEGMDQD) form a disordered region. Positions 702-724 (SDSESENEDEDGDNREEEGMDQD) are enriched in acidic residues.

The protein belongs to the crooked-neck family. Associated with the spliceosome.

The protein resides in the nucleus. In terms of biological role, involved in pre-mRNA splicing and cell cycle progression. Required for the spliceosome assembly and initiation of the DNA replication. The protein is Pre-mRNA-splicing factor CLF1 (CLF1) of Cryptococcus neoformans var. grubii serotype A (strain H99 / ATCC 208821 / CBS 10515 / FGSC 9487) (Filobasidiella neoformans var. grubii).